The following is a 252-amino-acid chain: Isoprenyl transferase (252 aa).

Asp32 is a catalytic residue. Asp32 is a binding site for Mg(2+). Residues 33 to 36, Trp37, Arg45, His49, and 77 to 79 contribute to the substrate site; these read GNGR and STE. Residue Asn80 is the Proton acceptor of the active site. Substrate-binding positions include Trp81, Arg83, Arg200, and 206–208; that span reads RLS. Position 219 (Glu219) interacts with Mg(2+).

The protein belongs to the UPP synthase family. In terms of assembly, homodimer. Mg(2+) serves as cofactor.

Functionally, catalyzes the condensation of isopentenyl diphosphate (IPP) with allylic pyrophosphates generating different type of terpenoids. The protein is Isoprenyl transferase of Listeria innocua serovar 6a (strain ATCC BAA-680 / CLIP 11262).